The chain runs to 254 residues: Type III pantothenate kinase (254 aa).

6-13 (DVGNTNIV) is a binding site for ATP. Residues phenylalanine 100 and 107–110 (GADR) contribute to the substrate site. Aspartate 109 functions as the Proton acceptor in the catalytic mechanism. Aspartate 129 contributes to the K(+) binding site. An ATP-binding site is contributed by threonine 132. Substrate is bound at residue threonine 184.

The protein belongs to the type III pantothenate kinase family. As to quaternary structure, homodimer. It depends on NH4(+) as a cofactor. K(+) serves as cofactor.

The protein localises to the cytoplasm. It carries out the reaction (R)-pantothenate + ATP = (R)-4'-phosphopantothenate + ADP + H(+). It participates in cofactor biosynthesis; coenzyme A biosynthesis; CoA from (R)-pantothenate: step 1/5. Catalyzes the phosphorylation of pantothenate (Pan), the first step in CoA biosynthesis. This Moorella thermoacetica (strain ATCC 39073 / JCM 9320) protein is Type III pantothenate kinase.